A 571-amino-acid polypeptide reads, in one-letter code: Urease subunit alpha (571 aa).

The Urease domain maps to 133–571; sequence GGIDTHVHFI…LPLTQRYFLF (439 aa). Residues histidine 138, histidine 140, and lysine 221 each contribute to the Ni(2+) site. At lysine 221 the chain carries N6-carboxylysine. Histidine 223 is a binding site for substrate. Positions 250 and 276 each coordinate Ni(2+). The active-site Proton donor is histidine 324. Aspartate 364 is a Ni(2+) binding site.

It belongs to the metallo-dependent hydrolases superfamily. Urease alpha subunit family. In terms of assembly, heterotrimer of UreA (gamma), UreB (beta) and UreC (alpha) subunits. Three heterotrimers associate to form the active enzyme. It depends on Ni cation as a cofactor. Post-translationally, carboxylation allows a single lysine to coordinate two nickel ions.

It localises to the cytoplasm. It carries out the reaction urea + 2 H2O + H(+) = hydrogencarbonate + 2 NH4(+). The protein operates within nitrogen metabolism; urea degradation; CO(2) and NH(3) from urea (urease route): step 1/1. This Staphylococcus epidermidis (strain ATCC 35984 / DSM 28319 / BCRC 17069 / CCUG 31568 / BM 3577 / RP62A) protein is Urease subunit alpha.